Here is a 666-residue protein sequence, read N- to C-terminus: Phosphoenolpyruvate carboxykinase (ATP) (666 aa).

2 disordered regions span residues Met1–Pro68 and Ala91–Ala132. The span at Ala48–Thr58 shows a compositional bias: polar residues. Over residues Lys109–Ala123 the composition is skewed to low complexity. Gly364–Thr371 serves as a coordination point for ATP.

Belongs to the phosphoenolpyruvate carboxykinase (ATP) family.

The protein localises to the cytoplasm. It catalyses the reaction oxaloacetate + ATP = phosphoenolpyruvate + ADP + CO2. It participates in carbohydrate biosynthesis; gluconeogenesis. The chain is Phosphoenolpyruvate carboxykinase (ATP) from Zea mays (Maize).